Reading from the N-terminus, the 295-residue chain is Protease HtpX (295 aa).

Helical transmembrane passes span 4-24 and 42-62; these read ILLFLATNLAVVLIASITLSL and QLLVFCAVFGFAGSLFSLFIS. Histidine 147 is a binding site for Zn(2+). Glutamate 148 is an active-site residue. Histidine 151 lines the Zn(2+) pocket. Helical transmembrane passes span 158–178 and 195–215; these read VTLALVQGVVNTFVMFFARII and IAYFVATIFAEVVLGFLASAI. Glutamate 224 contributes to the Zn(2+) binding site.

This sequence belongs to the peptidase M48B family. Zn(2+) serves as cofactor.

It localises to the cell inner membrane. The chain is Protease HtpX from Pseudomonas fluorescens (strain SBW25).